Reading from the N-terminus, the 264-residue chain is Non-homologous end-joining factor xrc4 (264 aa).

Residues 173 to 186 are compositionally biased toward basic and acidic residues; that stretch reads RNNEDNEDNHHINY. Residues 173 to 264 form a disordered region; the sequence is RNNEDNEDNH…SHESSETVSE (92 aa). Polar residues predominate over residues 200 to 209; sequence QEGVNSSAVS. Residues 248–264 are compositionally biased toward basic and acidic residues; that stretch reads DDSHRRSSHESSETVSE.

It belongs to the XRCC4-XLF family. XRCC4 subfamily. Interacts with lig4; the interaction is direct.

It is found in the nucleus. In terms of biological role, involved in double-strand break repair via non-homologous end joining (NHEJ); the repair of a double-strand break in DNA in which the two broken ends are rejoined with little or no sequence complementarity. This Schizosaccharomyces pombe (strain 972 / ATCC 24843) (Fission yeast) protein is Non-homologous end-joining factor xrc4.